The sequence spans 316 residues: MEVIKITPRGYCYGVVDAMVIARNAALDPSLPRPIYILGMIVHNKHVTDAFAEEGIITLDGENRLEILEKIERGTVIFTAHGVSPEVKKRALEKGLVTIDATCPDVTKTHRLIEQKLADGYDIIYIGKKGHPEPEGAVGINPERIHLVETPDDVERLSLKNERLMVTNQTTMSQWDVADIMAKVKEKYPHVEMHKEICLATQLRQEAVAEQAKEADVTIVVGDPRSNNSNRLAQVSEEIAGTKAYRIADVTEIDINWIKNAKKVAVTAGASTPTPITKEVIDFLEQFDPNDPATWERERKVPLQKILPKVKTKKEE.

C12 provides a ligand contact to [4Fe-4S] cluster. H43 and H81 together coordinate (2E)-4-hydroxy-3-methylbut-2-enyl diphosphate. Residues H43 and H81 each coordinate dimethylallyl diphosphate. Residues H43 and H81 each contribute to the isopentenyl diphosphate site. A [4Fe-4S] cluster-binding site is contributed by C103. A (2E)-4-hydroxy-3-methylbut-2-enyl diphosphate-binding site is contributed by H131. H131 is a binding site for dimethylallyl diphosphate. H131 is a binding site for isopentenyl diphosphate. E133 functions as the Proton donor in the catalytic mechanism. Position 170 (T170) interacts with (2E)-4-hydroxy-3-methylbut-2-enyl diphosphate. [4Fe-4S] cluster is bound at residue C198. Residues S226, N228, and S271 each contribute to the (2E)-4-hydroxy-3-methylbut-2-enyl diphosphate site. Residues S226, N228, and S271 each contribute to the dimethylallyl diphosphate site. 3 residues coordinate isopentenyl diphosphate: S226, N228, and S271.

Belongs to the IspH family. [4Fe-4S] cluster serves as cofactor.

The enzyme catalyses isopentenyl diphosphate + 2 oxidized [2Fe-2S]-[ferredoxin] + H2O = (2E)-4-hydroxy-3-methylbut-2-enyl diphosphate + 2 reduced [2Fe-2S]-[ferredoxin] + 2 H(+). It catalyses the reaction dimethylallyl diphosphate + 2 oxidized [2Fe-2S]-[ferredoxin] + H2O = (2E)-4-hydroxy-3-methylbut-2-enyl diphosphate + 2 reduced [2Fe-2S]-[ferredoxin] + 2 H(+). It participates in isoprenoid biosynthesis; dimethylallyl diphosphate biosynthesis; dimethylallyl diphosphate from (2E)-4-hydroxy-3-methylbutenyl diphosphate: step 1/1. It functions in the pathway isoprenoid biosynthesis; isopentenyl diphosphate biosynthesis via DXP pathway; isopentenyl diphosphate from 1-deoxy-D-xylulose 5-phosphate: step 6/6. Its function is as follows. Catalyzes the conversion of 1-hydroxy-2-methyl-2-(E)-butenyl 4-diphosphate (HMBPP) into a mixture of isopentenyl diphosphate (IPP) and dimethylallyl diphosphate (DMAPP). Acts in the terminal step of the DOXP/MEP pathway for isoprenoid precursor biosynthesis. This is 4-hydroxy-3-methylbut-2-enyl diphosphate reductase from Geobacillus thermodenitrificans (strain NG80-2).